A 922-amino-acid polypeptide reads, in one-letter code: DNA gyrase subunit A (922 aa).

Residues 1 to 14 (MTETPTDGGSTPPS) are compositionally biased toward low complexity. Residues 1 to 24 (MTETPTDGGSTPPSDGGGPGGRIE) form a disordered region. A Topo IIA-type catalytic domain is found at 49 to 518 (LPDVRDGLKP…ADGDLSMEDL (470 aa)). Tyr137 acts as the O-(5'-phospho-DNA)-tyrosine intermediate in catalysis. A GyrA-box motif is present at residues 545–551 (QRRGGKG). Residues 861-922 (EANGDDELDE…TEPDPGESDG (62 aa)) are disordered. Acidic residues-rich tracts occupy residues 863 to 890 (NGDDELDELDESALDEGGAEGGEVDESA) and 912 to 922 (DTEPDPGESDG).

Belongs to the type II topoisomerase GyrA/ParC subunit family. As to quaternary structure, heterotetramer, composed of two GyrA and two GyrB chains. In the heterotetramer, GyrA contains the active site tyrosine that forms a transient covalent intermediate with DNA, while GyrB binds cofactors and catalyzes ATP hydrolysis.

Its subcellular location is the cytoplasm. It catalyses the reaction ATP-dependent breakage, passage and rejoining of double-stranded DNA.. Its function is as follows. A type II topoisomerase that negatively supercoils closed circular double-stranded (ds) DNA in an ATP-dependent manner to modulate DNA topology and maintain chromosomes in an underwound state. Negative supercoiling favors strand separation, and DNA replication, transcription, recombination and repair, all of which involve strand separation. Also able to catalyze the interconversion of other topological isomers of dsDNA rings, including catenanes and knotted rings. Type II topoisomerases break and join 2 DNA strands simultaneously in an ATP-dependent manner. The chain is DNA gyrase subunit A from Nocardioides sp. (strain ATCC BAA-499 / JS614).